Consider the following 237-residue polypeptide: uncharacterized protein (237 aa).

The N-terminal stretch at 1–27 is a signal peptide; it reads MKSFLRKPKFWLLLLGGLSTSSIILSA. The N-palmitoyl cysteine moiety is linked to residue C28. C28 is lipidated: S-diacylglycerol cysteine.

Belongs to the MG307/MG309/MG338 family.

The protein resides in the membrane. This is an uncharacterized protein from Mycoplasma pneumoniae (strain ATCC 29342 / M129 / Subtype 1) (Mycoplasmoides pneumoniae).